Consider the following 147-residue polypeptide: UPF0208 membrane protein CGSHiEE_06015 (147 aa).

2 helical membrane passes run 38 to 58 (FAQKFMPFVAVFAILWQQIYA) and 67 to 87 (IAILTALFALLIPFQGLYWLG).

Belongs to the UPF0208 family.

It localises to the cell inner membrane. The sequence is that of UPF0208 membrane protein CGSHiEE_06015 from Haemophilus influenzae (strain PittEE).